The following is a 584-amino-acid chain: Transcriptional regulator STP2 (584 aa).

2 stretches are compositionally biased toward polar residues: residues 1–11 (MSVAITSNNNK) and 180–202 (AESN…SISD). Disordered stretches follow at residues 1 to 22 (MSVA…PHLK) and 161 to 214 (KMHP…STVS). Over residues 203-214 (SPSHSETESTVS) the composition is skewed to low complexity. The segment at 225 to 247 (FKCPSCDAEFRVRGYLTRHMKKH) adopts a C2H2-type zinc-finger fold. Disordered stretches follow at residues 381–496 (RQKK…PQQP) and 553–584 (QYQP…SMYF). Residues 394–407 (SESSIQSQESESSI) show a composition bias toward low complexity. Over residues 431–441 (QHQHQHHHHVQ) the composition is skewed to basic residues. Low complexity predominate over residues 442–480 (NQHQQHVNQQQSIATPASIYSSSASSTSSYESTHSPYTP). Residues 481–496 (QSSRSPLSHMYNPQQP) are compositionally biased toward polar residues.

Post-translationally, proteolytically cleaved: activated by the amino acid-induced proteolytic removal of an N-terminal inhibitory domain.

Its subcellular location is the cell membrane. The protein resides in the nucleus. Its function is as follows. Transcription factor involved in the regulation of gene expression in response to extracellular amino acid levels. Synthesized as latent cytoplasmic precursor, which, upon a signal initiated by the plasma membrane SPS amino acid sensor system (including CSY1 and CSH3), becomes proteolytically activated and relocates to the nucleus, where it induces the expression of SPS-sensor-regulated genes. Required for efficient alkalinization through the release of ammonia from the cells produced during the breakdown of amino acids, and subsequent switch to the hyphal form. This chain is Transcriptional regulator STP2 (STP2), found in Candida albicans (strain SC5314 / ATCC MYA-2876) (Yeast).